The primary structure comprises 345 residues: Ferrochelatase (345 aa).

Residues His-192 and Glu-295 each coordinate Fe cation.

The protein belongs to the ferrochelatase family.

The protein localises to the cytoplasm. The enzyme catalyses heme b + 2 H(+) = protoporphyrin IX + Fe(2+). It participates in porphyrin-containing compound metabolism; protoheme biosynthesis; protoheme from protoporphyrin-IX: step 1/1. Catalyzes the ferrous insertion into protoporphyrin IX. In Opitutus terrae (strain DSM 11246 / JCM 15787 / PB90-1), this protein is Ferrochelatase.